The following is a 448-amino-acid chain: UDP-N-acetylmuramoylalanine--D-glutamate ligase (448 aa).

Residue 116–122 participates in ATP binding; it reads GSNAKST.

The protein belongs to the MurCDEF family.

The protein localises to the cytoplasm. It catalyses the reaction UDP-N-acetyl-alpha-D-muramoyl-L-alanine + D-glutamate + ATP = UDP-N-acetyl-alpha-D-muramoyl-L-alanyl-D-glutamate + ADP + phosphate + H(+). The protein operates within cell wall biogenesis; peptidoglycan biosynthesis. Functionally, cell wall formation. Catalyzes the addition of glutamate to the nucleotide precursor UDP-N-acetylmuramoyl-L-alanine (UMA). This is UDP-N-acetylmuramoylalanine--D-glutamate ligase from Pseudomonas syringae pv. tomato (strain ATCC BAA-871 / DC3000).